The sequence spans 161 residues: Endoribonuclease YbeY (161 aa).

Residues His127, His131, and His137 each contribute to the Zn(2+) site.

The protein belongs to the endoribonuclease YbeY family. Zn(2+) serves as cofactor.

It localises to the cytoplasm. Functionally, single strand-specific metallo-endoribonuclease involved in late-stage 70S ribosome quality control and in maturation of the 3' terminus of the 16S rRNA. The polypeptide is Endoribonuclease YbeY (Listeria welshimeri serovar 6b (strain ATCC 35897 / DSM 20650 / CCUG 15529 / CIP 8149 / NCTC 11857 / SLCC 5334 / V8)).